The sequence spans 416 residues: Prostacyclin receptor (416 aa).

The Extracellular segment spans residues 1 to 45 (MVASGGRPDGPPSITPESPLIVGGREWQGMAGSCWNITYVQDSVG). Intrachain disulfides connect cysteine 34/cysteine 194 and cysteine 121/cysteine 199. A glycan (N-linked (GlcNAc...) asparagine) is linked at asparagine 36. The chain crosses the membrane as a helical span at residues 46–67 (PATSTLMFVAGVVGNGLALGIL). Residues 68–80 (GARRRSHPSAFAV) lie on the Cytoplasmic side of the membrane. Residues 81 to 105 (LVTGLAVTDLLGTCFLSPAVFVAYA) form a helical membrane-spanning segment. Topologically, residues 106-123 (RNSSLLGLAHGGTMLCDT) are extracellular. The helical transmembrane segment at 124–144 (FAFAMTFFGLASTLILFAMAV) threads the bilayer. Topologically, residues 145 to 163 (ERCLALSHPYLYAQLDGPR) are cytoplasmic. The chain crosses the membrane as a helical span at residues 164–187 (CARLALPAIYAFCCLFCSLPLLGL). Topologically, residues 188-215 (GEHQQYCPGSWCFIRMRSPQPGGCAFSL) are extracellular. The chain crosses the membrane as a helical span at residues 216-237 (AYASLMALLVTSIFFCNGSVTL). Residues 238–264 (SLCHMYRQQRRHHGSFVPTSRAREDEV) lie on the Cytoplasmic side of the membrane. A helical membrane pass occupies residues 265–289 (YHLILLALMTGIMAVCSLPLTIRGF). Over 290-302 (TQAIAPDSREMGD) the chain is Extracellular. Residues 303-323 (LHAFRFNAFNPILDPWVFILF) form a helical membrane-spanning segment. Over 324–416 (RKAVFQRLKF…TEAVVACSLC (93 aa)) the chain is Cytoplasmic. Serine 366 carries the post-translational modification Phosphoserine. Cysteine methyl ester is present on cysteine 413. Cysteine 413 carries S-farnesyl cysteine lipidation. Residues 414 to 416 (SLC) constitute a propeptide, removed in mature form.

The protein belongs to the G-protein coupled receptor 1 family. Interacts (non-isoprenylated C-terminus) with PDZK1. In terms of processing, isoprenylation does not influence ligand binding but is required for efficient coupling to the effectors adenylyl cyclase and phospholipase C.

The protein localises to the cell membrane. Receptor for prostacyclin (prostaglandin I2 or PGI2). The activity of this receptor is mediated by G(s) proteins which activate adenylate cyclase. This is Prostacyclin receptor (Ptgir) from Rattus norvegicus (Rat).